Reading from the N-terminus, the 909-residue chain is MANEQKTAAKDVFQARKTFTTNGKTYHYYSLKALEDSGIGKVSKLPYSIKVLLESVLRQVDGFVIKKEHVENLAKWGTAELKDIDVPFKPSRVILQDFTGVPAVVDLASLRKAMAAVGGDPDKINPEIPVDLVIDHSVQVDKAGTEDALAVNMDLEFERNAERYKFLSWAKKAFNNYQAVPPATGIVHQVNLEFLASVVHAIEEDGELVTYPDTLVGTDSHTTMINGIGVLGWGVGGIEAEAGMLGQPSYFPVPEVIGAKLVGKLPNGTTATDLALKVTQVLREKGVVGKFVEFFGPGIAELPLADRATIANMAPEYGATCGFFPVDEEALNYLRLTGRDPEHIDVVEAYCRSNGLFYTPDAEDPQFTDVVEIDLSQIEANLSGPKRPQDLIPLSAMQETFKKQLVSPAGNQGFGLNAEEENKEIKFKLLNGEETVMKTGAIAIAAITSCTNTSNPYVLIGAGLVAKKAVELGLKVPNYVKTSLAPGSKVVTGYLVNSGLLPYMKELGFNLVGYGCTTCIGNSGPLSPEIEEAVAKNDLLITSVLSGNRNFEGRIHPLVKGNYLASPPLVVAYALAGTVNINLKTDPIGVGKDGQNVYFNDIWPSMDEINALVKQTVTPELFRKEYETVFDDNKRWNEIETTDEALYKWDNDSTYIQNPPFFEEMSVEPGKVEPLKGLRVVGKFGDSVTTDHISPAGAIGKDTPAGKYLQEKGVSPRDFNSYGSRRGNHEVMMRGTFANIRIKNQIAPGTEGGFTTYWPTGEVTSIYDACMKYKEDKTGLVVLAGKDYGMGSSRDWAAKGTNLLGIRTVIAESFERIHRSNLVFMGVLPLQFKQGENADTLGLTGKEVIEVDVDETVRPRDLVTVRAINEDGNVTTFEAVVRFDSEVEIDYYRHGGILQMVLREKMKQS.

Positions 450, 516, and 519 each coordinate [4Fe-4S] cluster.

The protein belongs to the aconitase/IPM isomerase family. As to quaternary structure, monomer. The cofactor is [4Fe-4S] cluster.

The catalysed reaction is citrate = D-threo-isocitrate. The enzyme catalyses 3-hydroxybutane-1,2,3-tricarboxylate = 2-methyl-cis-aconitate + H2O. It functions in the pathway carbohydrate metabolism; tricarboxylic acid cycle; isocitrate from oxaloacetate: step 2/2. In terms of biological role, involved in both the tricarboxylic acid (TCA) and methylcitric acid cycles. Catalyzes the reversible isomerization of citrate to isocitrate via cis-aconitate. Also catalyzes the rehydration of 2-methyl-cis-aconitate to produce 2-methylisocitrate. The apo form of AcnA functions as a RNA-binding regulatory protein which plays a role in the regulation of citrate concentration and in the sporulation. To prevent the accumulation of excessive levels of citrate, it binds near the 5' end of the citZ mRNA, decreasing its stability and thereby limiting the concentration of citrate synthase in the cell. Aconitase also binds to the gerE transcript late in sporulation and stabilizes it for translation, thereby increasing the rate and level of GerE protein accumulation. The polypeptide is Aconitate hydratase A (citB) (Bacillus subtilis (strain 168)).